The primary structure comprises 363 residues: Des-methyl DIF-1 methyltransferase A (363 aa).

Positions 195, 221, 250, 251, and 266 each coordinate S-adenosyl-L-methionine. The active-site Proton acceptor is His270.

This sequence belongs to the class I-like SAM-binding methyltransferase superfamily. Cation-independent O-methyltransferase family. COMT subfamily.

The catalysed reaction is (3,5-dichloro-2,4,6-trihydroxyphenyl)hexan-1-one + S-adenosyl-L-methionine = 1-(3,5-dichloro-2,6-dihydroxy-4-methoxyphenyl)hexan-1-one + S-adenosyl-L-homocysteine + H(+). In terms of biological role, O-methyltransferase; part of the gene cluster that mediates the biosynthesis of DIF-1 (Differentiation Inducing Factor-1), a signal molecule involved in the differentiation of pstO (prestalk-O) cells. The three-step process begins with the formation of (2,4,6-trihydroxyphenyl)-1-hexan-1-one (THPH) by the polyketide synthase StlB. THPH is then dichlorinated by the flavin-dependent halogenase ChlA. The last step of DIF-1 biosynthesis is the O-methylation of dichloro-THPH (or des-methyl-DIF-1) by the methyltransferase DmtA to yield DIF-1. The polypeptide is Des-methyl DIF-1 methyltransferase A (Dictyostelium discoideum (Social amoeba)).